The primary structure comprises 319 residues: Very-long-chain 3-oxoacyl-CoA reductase-A (319 aa).

A helical membrane pass occupies residues 17–37; that stretch reads LFWVGALITASLALYVVYKTI. 56–85 contributes to the NADP(+) binding site; the sequence is GKWAVVTGATDGIGKSYAEELARRGFSMML. The next 2 membrane-spanning stretches (helical) occupy residues 188-208 and 282-302; these read GVIL…LTIY and AVMG…NLGL. Residue S195 participates in substrate binding. The Proton acceptor role is filled by Y208.

The protein belongs to the short-chain dehydrogenases/reductases (SDR) family. 17-beta-HSD 3 subfamily.

Its subcellular location is the endoplasmic reticulum membrane. It catalyses the reaction a very-long-chain (3R)-3-hydroxyacyl-CoA + NADP(+) = a very-long-chain 3-oxoacyl-CoA + NADPH + H(+). The enzyme catalyses 17beta-estradiol + NAD(+) = estrone + NADH + H(+). The catalysed reaction is 17beta-estradiol + NADP(+) = estrone + NADPH + H(+). It participates in lipid metabolism; fatty acid biosynthesis. It functions in the pathway steroid biosynthesis; estrogen biosynthesis. Its function is as follows. Catalyzes the second of the four reactions of the long-chain fatty acids elongation cycle. This endoplasmic reticulum-bound enzymatic process, allows the addition of two carbons to the chain of long- and very long-chain fatty acids/VLCFAs per cycle. This enzyme has a 3-ketoacyl-CoA reductase activity, reducing 3-ketoacyl-CoA to 3-hydroxyacyl-CoA, within each cycle of fatty acid elongation. Thereby, it may participate in the production of VLCFAs of different chain lengths that are involved in multiple biological processes as precursors of membrane lipids and lipid mediators. May also catalyze the transformation of estrone (E1) into estradiol (E2) and play a role in estrogen formation. This Danio rerio (Zebrafish) protein is Very-long-chain 3-oxoacyl-CoA reductase-A (hsd17b12a).